A 409-amino-acid chain; its full sequence is MTKISDLPRDLAEEVLSRVPVTYLRAIRFTCKKWNTLTKRRSFTKKLIGQEKAEAKVKEFHAIMTLNSRLHLMSVNLDGIHKDENVESSIKQKGKLISLTVADPDRIVISQVYHCDGLLLCITNEINSRLVVWNPYSGQTRWIEPRTSYREWDIYALGYESKNNAKRSYKILRYLDAYEDMGDMSVEPRTRVCEFEIYSLDTNSWKVIEVTTDWDLCFLHRGVTLKGNTYWFAREKIPPPPRERVIEDIPLGEAEINVEIPSFLLCFDFTIEKFGSRLPLPFRPCVDDTITLSSVREEKLAVLYQRWDITWTGIWISNKIEPNAVSWSKLFFPMGRIRPLEAASGTFFVDEENKLVVLFDKGESILNPTRNTAYIVGEDGYIKPVDLGESVHKYCFPLACSYVPSSVQI.

Positions 1-47 constitute an F-box domain; sequence MTKISDLPRDLAEEVLSRVPVTYLRAIRFTCKKWNTLTKRRSFTKKL.

This chain is F-box protein At3g17320, found in Arabidopsis thaliana (Mouse-ear cress).